The sequence spans 139 residues: Protein spalt-accessory (139 aa).

Residues 1 to 16 (MKLLIALLALVTAAIA) form the signal peptide. Residues 60 to 75 (GIGQGGVHPGQGGFAG) are compositionally biased toward gly residues. A disordered region spans residues 60-139 (GIGQGGVHPG…HHEHHGHHRH (80 aa)). A compositionally biased stretch (basic and acidic residues) spans 109–121 (NPHEYPEHHGEHH). A compositionally biased stretch (basic residues) spans 122 to 139 (REHHEHHGHHEHHGHHRH).

It localises to the secreted. In terms of biological role, likely to be involved in the establishment of the head. The protein is Protein spalt-accessory (sala) of Drosophila simulans (Fruit fly).